The following is a 634-amino-acid chain: Probable LRR receptor-like serine/threonine-protein kinase At2g23950 (634 aa).

The signal sequence occupies residues 1-27; it reads MVVMKLITMKIFSVLLLLCFFVTCSLS. Over 28-236 the chain is Extracellular; the sequence is SEPRNPEVEA…SSGRRTNILA (209 aa). 2 N-linked (GlcNAc...) asparagine glycosylation sites follow: N96 and N109. 4 LRR repeats span residues 99–121, 123–145, 147–167, and 171–193; these read NLRQ…ICSL, KLQT…VNQL, NLQY…ASLS, and HLSF…PART. N155 is a glycosylation site (N-linked (GlcNAc...) asparagine). The helical transmembrane segment at 237-257 threads the bilayer; sequence VALGVSLGFAVSVILSLGFIW. Residues 258–634 lie on the Cytoplasmic side of the membrane; it reads YRKKQRRLTM…SFAMELSGPR (377 aa). T296 bears the Phosphothreonine mark. The region spanning 299 to 554 is the Protein kinase domain; the sequence is FSSKSILGAG…QVALLCTQFL (256 aa). 305–313 contacts ATP; sequence LGAGGFGNV. Phosphothreonine is present on T322. An ATP-binding site is contributed by K327. Phosphoserine is present on residues S380 and S383. Position 395 is a phosphothreonine (T395). Catalysis depends on D422, which acts as the Proton acceptor. Residues T455, T456, and T461 each carry the phosphothreonine modification. Phosphotyrosine is present on Y469. A Phosphoserine modification is found at S471. Position 472 is a phosphothreonine (T472). Phosphoserine is present on S476. T551 carries the post-translational modification Phosphothreonine.

It belongs to the protein kinase superfamily. Ser/Thr protein kinase family.

It is found in the membrane. The catalysed reaction is L-seryl-[protein] + ATP = O-phospho-L-seryl-[protein] + ADP + H(+). It carries out the reaction L-threonyl-[protein] + ATP = O-phospho-L-threonyl-[protein] + ADP + H(+). The sequence is that of Probable LRR receptor-like serine/threonine-protein kinase At2g23950 from Arabidopsis thaliana (Mouse-ear cress).